The sequence spans 217 residues: MKALIYARVSTNKEQQETSLKRQEEELTAIAAENGMEVVKVISEKASGYEMDRDGVFELLDEIKNADIDVILVQDETRLGRGNAKIALLHCIYREGVKVYTTAHRGELELSEADSMVLEIVSIVEEYQRKIHNMKIRRGMKRAVKNGFKPQKNLKNQHGNSGKEKIEVPISEIVRLRANKLTFAEIAATLRGFGYDVSKATVHRRFQEYIENEETAE.

One can recognise a Resolvase/invertase-type recombinase catalytic domain in the interval 2–147 (KALIYARVST…RGMKRAVKNG (146 aa)). Serine 10 acts as the O-(5'-phospho-DNA)-serine intermediate in catalysis.

Belongs to the site-specific recombinase resolvase family.

In Bacillus subtilis (strain 168), this protein is Resolvase homolog YneB (yneB).